Consider the following 465-residue polypeptide: UDP-N-acetylmuramoylalanine--D-glutamate ligase (465 aa).

116-122 contributes to the ATP binding site; sequence GTNGKTT.

This sequence belongs to the MurCDEF family.

The protein resides in the cytoplasm. The enzyme catalyses UDP-N-acetyl-alpha-D-muramoyl-L-alanine + D-glutamate + ATP = UDP-N-acetyl-alpha-D-muramoyl-L-alanyl-D-glutamate + ADP + phosphate + H(+). The protein operates within cell wall biogenesis; peptidoglycan biosynthesis. Its function is as follows. Cell wall formation. Catalyzes the addition of glutamate to the nucleotide precursor UDP-N-acetylmuramoyl-L-alanine (UMA). This chain is UDP-N-acetylmuramoylalanine--D-glutamate ligase, found in Thermobifida fusca (strain YX).